Consider the following 318-residue polypeptide: uncharacterized protein (318 aa).

A coiled-coil region spans residues 67-157 (LAFDELEKEK…SLKAIQTSQE (91 aa)). The tract at residues 172–318 (ESTNKVEKNA…KGFFARLFNL (147 aa)) is disordered. Basic and acidic residues-rich tracts occupy residues 175–193 (NKVE…KDSK) and 219–236 (KVDK…EKAS). Residues 237–248 (VEQSKNENAAET) are compositionally biased toward polar residues. 2 stretches are compositionally biased toward basic and acidic residues: residues 249 to 274 (SNKE…HAEA) and 300 to 310 (SEPKPQEEKKG).

This is an uncharacterized protein from Staphylococcus aureus (strain Mu50 / ATCC 700699).